Reading from the N-terminus, the 188-residue chain is Ribosome maturation factor RimP (188 aa).

Belongs to the RimP family.

It is found in the cytoplasm. Its function is as follows. Required for maturation of 30S ribosomal subunits. The chain is Ribosome maturation factor RimP from Erythrobacter litoralis (strain HTCC2594).